A 169-amino-acid polypeptide reads, in one-letter code: UPF0251 protein MM_2090 (169 aa).

This sequence belongs to the UPF0251 family.

This chain is UPF0251 protein MM_2090, found in Methanosarcina mazei (strain ATCC BAA-159 / DSM 3647 / Goe1 / Go1 / JCM 11833 / OCM 88) (Methanosarcina frisia).